Here is a 231-residue protein sequence, read N- to C-terminus: Acyl-protein thioesterase 2 (231 aa).

A lipid anchor (S-palmitoyl cysteine) is attached at Cys2. Ser82 is subject to Phosphoserine. Residues Ser122, Asp176, and His210 each act as charge relay system in the active site.

The protein belongs to the AB hydrolase superfamily. AB hydrolase 2 family. Expressed in various breast cancer cell lines.

The protein localises to the cytoplasm. The enzyme catalyses S-hexadecanoyl-L-cysteinyl-[protein] + H2O = L-cysteinyl-[protein] + hexadecanoate + H(+). The catalysed reaction is prostaglandin E2 1-glyceryl ester + H2O = prostaglandin E2 + glycerol + H(+). It carries out the reaction 1-hexadecanoyl-sn-glycero-3-phosphocholine + H2O = sn-glycerol 3-phosphocholine + hexadecanoate + H(+). It catalyses the reaction 1-octadecanoyl-sn-glycero-3-phosphocholine + H2O = octadecanoate + sn-glycerol 3-phosphocholine + H(+). The enzyme catalyses 1-hexadecanoyl-sn-glycero-3-phosphate + H2O = sn-glycerol 3-phosphate + hexadecanoate + H(+). The catalysed reaction is 1-hexadecanoyl-sn-glycero-3-phospho-L-serine + H2O = sn-glycero-3-phospho-L-serine + hexadecanoate + H(+). With respect to regulation, inhibited by compound 1 or (5,5-Dioxido-4H-thieno[3,2-c]thiochromen-2-yl)(4-(4-methoxyphenyl)piperazin-1-yl)methanone. Functionally, acts as an acyl-protein thioesterase hydrolyzing fatty acids from S-acylated cysteine residues in proteins such as trimeric G alpha proteins, GSDMD, GAP43, ZDHHC6 or HRAS. Deacylates GAP43. Mediates depalmitoylation of ZDHHC6. Has lysophospholipase activity. Hydrolyzes prostaglandin glycerol esters (PG-Gs) in the following order prostaglandin D2-glycerol ester (PGD2-G) &gt; prostaglandin E2 glycerol ester (PGE2-G) &gt; prostaglandin F2-alpha-glycerol ester (PGF2-alpha-G). Hydrolyzes 1-arachidonoylglycerol but not 2-arachidonoylglycerol or arachidonoylethanolamide. The sequence is that of Acyl-protein thioesterase 2 (LYPLA2) from Homo sapiens (Human).